We begin with the raw amino-acid sequence, 94 residues long: DNA-binding protein HU (94 aa).

The disordered stretch occupies residues 56–94 (QKGKEGKVPGSDKTYKTEDKRVPKFKPGKTLKQKVEEGK). Over residues 68-77 (KTYKTEDKRV) the composition is skewed to basic and acidic residues. Residues 78-87 (PKFKPGKTLK) are compositionally biased toward basic residues.

This sequence belongs to the bacterial histone-like protein family. Homodimer.

Histone-like DNA-binding protein which is capable of wrapping DNA to stabilize it, and thus to prevent its denaturation under extreme environmental conditions. This is DNA-binding protein HU (hup) from Helicobacter pylori (strain ATCC 700392 / 26695) (Campylobacter pylori).